The chain runs to 345 residues: S-adenosylmethionine:tRNA ribosyltransferase-isomerase (345 aa).

Belongs to the QueA family. Monomer.

The protein resides in the cytoplasm. The enzyme catalyses 7-aminomethyl-7-carbaguanosine(34) in tRNA + S-adenosyl-L-methionine = epoxyqueuosine(34) in tRNA + adenine + L-methionine + 2 H(+). Its pathway is tRNA modification; tRNA-queuosine biosynthesis. Its function is as follows. Transfers and isomerizes the ribose moiety from AdoMet to the 7-aminomethyl group of 7-deazaguanine (preQ1-tRNA) to give epoxyqueuosine (oQ-tRNA). This Shewanella sp. (strain MR-7) protein is S-adenosylmethionine:tRNA ribosyltransferase-isomerase.